Reading from the N-terminus, the 333-residue chain is Glyceraldehyde-3-phosphate dehydrogenase (333 aa).

NAD(+)-binding positions include 11 to 12, Asp-33, Arg-78, and Ser-120; that span reads RI. D-glyceraldehyde 3-phosphate is bound by residues 149-151, Thr-180, 209-210, and Arg-232; these read SCT and TG. Cys-150 functions as the Nucleophile in the catalytic mechanism. Cys-150 carries the post-translational modification S-nitrosocysteine. Asn-314 contributes to the NAD(+) binding site.

The protein belongs to the glyceraldehyde-3-phosphate dehydrogenase family. In terms of assembly, homotetramer. In terms of processing, S-nitrosylation of Cys-150 leads to translocation to the nucleus.

The protein localises to the cytoplasm. Its subcellular location is the cytosol. The protein resides in the cytoskeleton. It localises to the nucleus. The enzyme catalyses D-glyceraldehyde 3-phosphate + phosphate + NAD(+) = (2R)-3-phospho-glyceroyl phosphate + NADH + H(+). The catalysed reaction is S-nitroso-L-cysteinyl-[GAPDH] + L-cysteinyl-[protein] = L-cysteinyl-[GAPDH] + S-nitroso-L-cysteinyl-[protein]. It participates in carbohydrate degradation; glycolysis; pyruvate from D-glyceraldehyde 3-phosphate: step 1/5. Functionally, has both glyceraldehyde-3-phosphate dehydrogenase and nitrosylase activities, thereby playing a role in glycolysis and nuclear functions, respectively. Glyceraldehyde-3-phosphate dehydrogenase is a key enzyme in glycolysis that catalyzes the first step of the pathway by converting D-glyceraldehyde 3-phosphate (G3P) into 3-phospho-D-glyceroyl phosphate. Participates in nuclear events including transcription, RNA transport, DNA replication and apoptosis. Nuclear functions are probably due to the nitrosylase activity that mediates cysteine S-nitrosylation of nuclear target proteins such as SIRT1, HDAC2 and PRKDC. The chain is Glyceraldehyde-3-phosphate dehydrogenase from Danio rerio (Zebrafish).